The following is a 183-amino-acid chain: Oleosin 5 (183 aa).

A polar region spans residues 1 to 39 (MADVRTHSHQLQVHPQRQHEGGIKVLYPQSGPSSTQVLA). 3 helical membrane-spanning segments follow: residues 37–57 (VLAV…AGLT), 66–86 (MLAF…AFVI), and 87–107 (GLAM…LSSM). The interval 40-113 (VFVGVPIGGT…LSSMSWVLNY (74 aa)) is hydrophobic. The segment at 144 to 183 (KDAGQTIEDKAHDVREAKTFDVRDRDTTKGTHNVRDTKTT) is disordered.

This sequence belongs to the oleosin family.

The protein resides in the lipid droplet. The protein localises to the membrane. Its function is as follows. May have a structural role to stabilize the lipid body during desiccation of the seed by preventing coalescence of the oil. Probably interacts with both lipid and phospholipid moieties of lipid bodies. May also provide recognition signals for specific lipase anchorage in lipolysis during seedling growth. This Arabidopsis thaliana (Mouse-ear cress) protein is Oleosin 5.